Here is a 484-residue protein sequence, read N- to C-terminus: tRNA sulfurtransferase (484 aa).

Residues E63 to R167 form the THUMP domain. Residues L185 to M186, K267, G289, and Q298 contribute to the ATP site. Residues C346 and C458 are joined by a disulfide bond. The Rhodanese domain maps to I406–P484. Catalysis depends on C458, which acts as the Cysteine persulfide intermediate.

This sequence belongs to the ThiI family.

The protein resides in the cytoplasm. It carries out the reaction [ThiI sulfur-carrier protein]-S-sulfanyl-L-cysteine + a uridine in tRNA + 2 reduced [2Fe-2S]-[ferredoxin] + ATP + H(+) = [ThiI sulfur-carrier protein]-L-cysteine + a 4-thiouridine in tRNA + 2 oxidized [2Fe-2S]-[ferredoxin] + AMP + diphosphate. It catalyses the reaction [ThiS sulfur-carrier protein]-C-terminal Gly-Gly-AMP + S-sulfanyl-L-cysteinyl-[cysteine desulfurase] + AH2 = [ThiS sulfur-carrier protein]-C-terminal-Gly-aminoethanethioate + L-cysteinyl-[cysteine desulfurase] + A + AMP + 2 H(+). It participates in cofactor biosynthesis; thiamine diphosphate biosynthesis. Catalyzes the ATP-dependent transfer of a sulfur to tRNA to produce 4-thiouridine in position 8 of tRNAs, which functions as a near-UV photosensor. Also catalyzes the transfer of sulfur to the sulfur carrier protein ThiS, forming ThiS-thiocarboxylate. This is a step in the synthesis of thiazole, in the thiamine biosynthesis pathway. The sulfur is donated as persulfide by IscS. The chain is tRNA sulfurtransferase from Colwellia psychrerythraea (strain 34H / ATCC BAA-681) (Vibrio psychroerythus).